The following is a 612-amino-acid chain: Rhamnogalacturonan exolyase YesX (612 aa).

N119 contributes to the substrate binding site. Ca(2+) is bound by residues D120, D125, D127, D129, E131, and E133. Substrate-binding residues include D139, E154, and R174. Residues D189, D191, D193, K195, and E197 each coordinate Ca(2+). Substrate contacts are provided by G205 and R222. Residues H330, D336, D338, D340, K342, E344, D353, H354, H366, D368, D374, D376, R379, G381, E383, and E389 each contribute to the Ca(2+) site. R419 is a substrate binding site. Residues D472, D474, V476, and E478 each coordinate Ca(2+). 516-518 (NGT) is a binding site for substrate. Residues N527, F529, D531, R533, E535, N576, and A578 each coordinate Ca(2+). Residue Y579 coordinates substrate. A Ca(2+)-binding site is contributed by N580.

It belongs to the polysaccharide lyase 11 family. In terms of assembly, monomer. The cofactor is Mn(2+). It depends on Zn(2+) as a cofactor. Co(2+) is required as a cofactor. Ca(2+) serves as cofactor.

The protein resides in the secreted. The catalysed reaction is Exotype eliminative cleavage of alpha-L-rhamnopyranosyl-(1-&gt;4)-alpha-D-galactopyranosyluronic acid bonds of rhamnogalacturonan I oligosaccharides containing alpha-L-rhamnopyranose at the reducing end and 4-deoxy-4,5-unsaturated D-galactopyranosyluronic acid at the non-reducing end. The products are the disaccharide 2-O-(4-deoxy-beta-L-threo-hex-4-enopyranuronosyl)-alpha-L-rhamnopyranose and the shortened rhamnogalacturonan oligosaccharide containing one 4-deoxy-4,5-unsaturated D-galactopyranosyluronic acid at the non-reducing end.. In terms of biological role, pectinolytic enzyme that degrades type I rhamnogalacturonan from plant cell walls and releases disaccharide products. Degrades rhamnogalacturonan, polygalacturonic acid and pectic acid. Has very low activity on pectin. This Bacillus subtilis (strain 168) protein is Rhamnogalacturonan exolyase YesX (yesX).